The primary structure comprises 250 residues: UPF0524 protein C3orf70 homolog (250 aa).

The disordered stretch occupies residues 201–250; sequence ESCDEDTEEGAELSSEEDYSPESSWEPDECTLLSPSQSDLEVIETIETTV. Positions 202–229 are enriched in acidic residues; sequence SCDEDTEEGAELSSEEDYSPESSWEPDE.

This sequence belongs to the UPF0524 family.

May play a role in neuronal and neurobehavioral development. The polypeptide is UPF0524 protein C3orf70 homolog (Bos taurus (Bovine)).